The following is a 133-amino-acid chain: ATP synthase epsilon chain, chloroplastic (133 aa).

The protein belongs to the ATPase epsilon chain family. As to quaternary structure, F-type ATPases have 2 components, CF(1) - the catalytic core - and CF(0) - the membrane proton channel. CF(1) has five subunits: alpha(3), beta(3), gamma(1), delta(1), epsilon(1). CF(0) has three main subunits: a, b and c.

The protein resides in the plastid. Its subcellular location is the chloroplast thylakoid membrane. Produces ATP from ADP in the presence of a proton gradient across the membrane. This Gossypium barbadense (Sea Island cotton) protein is ATP synthase epsilon chain, chloroplastic.